Here is a 232-residue protein sequence, read N- to C-terminus: tRNA1(Val) (adenine(37)-N6)-methyltransferase (232 aa).

This sequence belongs to the methyltransferase superfamily. tRNA (adenine-N(6)-)-methyltransferase family.

The protein resides in the cytoplasm. The enzyme catalyses adenosine(37) in tRNA1(Val) + S-adenosyl-L-methionine = N(6)-methyladenosine(37) in tRNA1(Val) + S-adenosyl-L-homocysteine + H(+). Specifically methylates the adenine in position 37 of tRNA(1)(Val) (anticodon cmo5UAC). The protein is tRNA1(Val) (adenine(37)-N6)-methyltransferase of Pseudoalteromonas translucida (strain TAC 125).